The sequence spans 159 residues: Large ribosomal subunit protein bL17 (159 aa).

Residues 119–138 (PVTPKAKPAKSTAKAAPKSK) show a composition bias toward low complexity. The disordered stretch occupies residues 119-159 (PVTPKAKPAKSTAKAAPKSKAPVEETPDEPASEETAEAEAD). The span at 143–159 (ETPDEPASEETAEAEAD) shows a compositional bias: acidic residues.

Belongs to the bacterial ribosomal protein bL17 family. As to quaternary structure, part of the 50S ribosomal subunit. Contacts protein L32.

The sequence is that of Large ribosomal subunit protein bL17 from Leifsonia xyli subsp. xyli (strain CTCB07).